We begin with the raw amino-acid sequence, 194 residues long: Imidazoleglycerol-phosphate dehydratase (194 aa).

This sequence belongs to the imidazoleglycerol-phosphate dehydratase family.

It localises to the cytoplasm. It carries out the reaction D-erythro-1-(imidazol-4-yl)glycerol 3-phosphate = 3-(imidazol-4-yl)-2-oxopropyl phosphate + H2O. Its pathway is amino-acid biosynthesis; L-histidine biosynthesis; L-histidine from 5-phospho-alpha-D-ribose 1-diphosphate: step 6/9. The sequence is that of Imidazoleglycerol-phosphate dehydratase from Streptococcus mutans serotype c (strain ATCC 700610 / UA159).